A 911-amino-acid polypeptide reads, in one-letter code: Isoleucine--tRNA ligase (911 aa).

The short motif at 57-67 (PYANGDIHMGH) is the 'HIGH' region element. Residue E551 participates in L-isoleucyl-5'-AMP binding. The 'KMSKS' region signature appears at 592-596 (KMSKS). K595 provides a ligand contact to ATP. C881, C884, C901, and C904 together coordinate Zn(2+).

The protein belongs to the class-I aminoacyl-tRNA synthetase family. IleS type 1 subfamily. Monomer. It depends on Zn(2+) as a cofactor.

The protein resides in the cytoplasm. The catalysed reaction is tRNA(Ile) + L-isoleucine + ATP = L-isoleucyl-tRNA(Ile) + AMP + diphosphate. Its function is as follows. Catalyzes the attachment of isoleucine to tRNA(Ile). As IleRS can inadvertently accommodate and process structurally similar amino acids such as valine, to avoid such errors it has two additional distinct tRNA(Ile)-dependent editing activities. One activity is designated as 'pretransfer' editing and involves the hydrolysis of activated Val-AMP. The other activity is designated 'posttransfer' editing and involves deacylation of mischarged Val-tRNA(Ile). In Exiguobacterium sibiricum (strain DSM 17290 / CCUG 55495 / CIP 109462 / JCM 13490 / 255-15), this protein is Isoleucine--tRNA ligase.